A 666-amino-acid polypeptide reads, in one-letter code: Sodium/potassium/calcium exchanger 2 (666 aa).

Topologically, residues 1–38 (MDLHQSPTARLLQKWCSHESPFGCRRHYNSRKKLKLIR) are cytoplasmic. Residues 39–59 (VIGLVMGLVAVSTVPFSISAF) traverse the membrane as a helical segment. At 60–133 (TETDSQSNRG…DIFSLEERRK (74 aa)) the chain is on the extracellular side. The tract at residues 63–122 (DSQSNRGEASDMSGPRVAQGHRQRTLLDLNDKIRDYTPQPPASQEDQAENSTEHTQGDYP) is disordered. Residue Asn-112 is glycosylated (N-linked (GlcNAc...) asparagine). Positions 113-122 (STEHTQGDYP) are enriched in basic and acidic residues. A helical membrane pass occupies residues 134–154 (GAIILHVIGMIYMFIALAIVC). At 155–179 (DEFFVPSLTVITEKLGISDDVAGAT) the chain is on the cytoplasmic side. One copy of the Alpha-1 repeat lies at 175 to 215 (VAGATFMAAGGSAPELFTSLIGVFIAHSNVGIGTIVGSAVF). The chain crosses the membrane as a helical span at residues 180–200 (FMAAGGSAPELFTSLIGVFIA). Over 201 to 205 (HSNVG) the chain is Extracellular. The helical transmembrane segment at 206-226 (IGTIVGSAVFNILFVIGMCAL) threads the bilayer. Topologically, residues 227–237 (FSREILNLTWW) are cytoplasmic. The chain crosses the membrane as a helical span at residues 238-258 (PLFRDVSFYIVDLLMLITFFL). Topologically, residues 259–260 (DN) are extracellular. The chain crosses the membrane as a helical span at residues 261–281 (VIMWWESLLLLTAYFAYVVFM). The Cytoplasmic portion of the chain corresponds to 282-502 (KFNVQVERWV…PDVRKPASRK (221 aa)). Residues 311–336 (KSPTAGDKDGPTLPSKPRLQRGGSSA) form a disordered region. Residues Ser-337 and Ser-341 each carry the phosphoserine modification. The interval 397–467 (VDENERQNGA…EEDDQPLSLS (71 aa)) is disordered. The span at 416-442 (PNSTSTEVEMTPSSEASEPVQNGNLSH) shows a compositional bias: polar residues. Residues 503-523 (FFPITFFGSITWIAVFSYLMV) traverse the membrane as a helical segment. The Extracellular segment spans residues 524–538 (WWAHQVGETIGISEE). A helical transmembrane segment spans residues 539–559 (IMGLTILAAGTSIPDLITSVI). An Alpha-2 repeat occupies 546–577 (AAGTSIPDLITSVIVARKGLGDMAVSSSVGSN). The Cytoplasmic portion of the chain corresponds to 560–574 (VARKGLGDMAVSSSV). Residues 575-595 (GSNIFDITVGLPLPWLLYTII) form a helical membrane-spanning segment. Residues 596-607 (HRFSPVTVSSNG) are Extracellular-facing. Residues 608–628 (LFCAIVLLFIMLLFVILSIAL) form a helical membrane-spanning segment. At 629–635 (CKWRMNK) the chain is on the cytoplasmic side. A helical membrane pass occupies residues 636-656 (ILGFIMFGLYFVFLVVSVLLE). Residues 657–666 (DKVLVCPVSI) lie on the Extracellular side of the membrane.

This sequence belongs to the Ca(2+):cation antiporter (CaCA) (TC 2.A.19) family. SLC24A subfamily.

The protein localises to the cell membrane. The enzyme catalyses Ca(2+)(out) + K(+)(out) + 4 Na(+)(in) = Ca(2+)(in) + K(+)(in) + 4 Na(+)(out). Functionally, calcium, potassium:sodium antiporter that transports 1 Ca(2+) and 1 K(+) in exchange for 4 Na(+). Required for learming and memory by regulating neuronal Ca(2+), which is essential for the development of synaptic plasticity. The protein is Sodium/potassium/calcium exchanger 2 of Mus musculus (Mouse).